A 2359-amino-acid chain; its full sequence is Neuron navigator 3 (2359 aa).

The region spanning isoleucine 77–glutamine 184 is the Calponin-homology (CH) domain. Composition is skewed to polar residues over residues threonine 204–threonine 226, serine 233–lysine 243, alanine 257–isoleucine 279, and glutamine 300–glutamine 317. 2 disordered regions span residues threonine 204–histidine 623 and glutamate 641–aspartate 660. The span at proline 318–serine 329 shows a compositional bias: low complexity. Over residues lysine 335–glutamine 352 the composition is skewed to polar residues. 2 stretches are compositionally biased toward low complexity: residues proline 353 to serine 363 and asparagine 427 to serine 439. Over residues proline 465–valine 491 the composition is skewed to basic and acidic residues. Low complexity predominate over residues isoleucine 522 to proline 536. The segment covering alanine 592–histidine 623 has biased composition (polar residues). Residues glutamate 680 to glutamine 708 are a coiled coil. Disordered regions lie at residues alanine 878–phenylalanine 1315, leucine 1413–serine 1472, glycine 1653–glutamine 1758, and glutamate 1829–serine 1855. Composition is skewed to low complexity over residues aspartate 883–aspartate 896 and asparagine 904–threonine 916. Over residues valine 917–lysine 926 the composition is skewed to polar residues. The segment covering glutamate 943–alanine 960 has biased composition (basic and acidic residues). Polar residues-rich tracts occupy residues glutamine 978–serine 989 and glutamine 997–leucine 1013. The span at glycine 1017–lysine 1029 shows a compositional bias: basic and acidic residues. Low complexity-rich tracts occupy residues glycine 1077–threonine 1095 and serine 1160–serine 1173. Residues glycine 1190–glutamine 1199 show a composition bias toward polar residues. 3 stretches are compositionally biased toward low complexity: residues valine 1209 to serine 1229, glycine 1256 to alanine 1266, and serine 1274 to leucine 1285. The segment covering glycine 1299–serine 1308 has biased composition (gly residues). A compositionally biased stretch (basic and acidic residues) spans asparagine 1439–arginine 1448. The span at serine 1449–glutamine 1461 shows a compositional bias: polar residues. Phosphoserine is present on residues serine 1462 and serine 1466. Residues serine 1462 to serine 1472 are compositionally biased toward low complexity. Residues alanine 1565–asparagine 1656 adopt a coiled-coil conformation. Low complexity-rich tracts occupy residues serine 1675–asparagine 1692 and serine 1749–glutamine 1758. A coiled-coil region spans residues glutamate 1768–lysine 1835. A compositionally biased stretch (low complexity) spans serine 1841–serine 1855.

The protein belongs to the Nav/unc-53 family. In terms of tissue distribution, present in neurons from central and peripheral nervous systems (at protein level). Highly expressed in brain cortex, midbrain, cerebellum and hippocampus.

Its subcellular location is the nucleus outer membrane. Its function is as follows. Plays a role in cell migration. May be involved in neuron regeneration. May regulate IL2 production by T-cells. The polypeptide is Neuron navigator 3 (Nav3) (Mus musculus (Mouse)).